Consider the following 334-residue polypeptide: Adenosine deaminase (334 aa).

Zn(2+)-binding residues include His12 and His14. Residues His14, Asp16, and Gly170 each coordinate substrate. His197 serves as a coordination point for Zn(2+). The active-site Proton donor is Glu200. Residue Asp278 coordinates Zn(2+). Asp279 is a substrate binding site.

This sequence belongs to the metallo-dependent hydrolases superfamily. Adenosine and AMP deaminases family. Adenosine deaminase subfamily. Requires Zn(2+) as cofactor.

It catalyses the reaction adenosine + H2O + H(+) = inosine + NH4(+). It carries out the reaction 2'-deoxyadenosine + H2O + H(+) = 2'-deoxyinosine + NH4(+). Catalyzes the hydrolytic deamination of adenosine and 2-deoxyadenosine. This is Adenosine deaminase from Yersinia pseudotuberculosis serotype IB (strain PB1/+).